Reading from the N-terminus, the 347-residue chain is S-adenosylmethionine:tRNA ribosyltransferase-isomerase (347 aa).

Belongs to the QueA family. As to quaternary structure, monomer.

The protein resides in the cytoplasm. It carries out the reaction 7-aminomethyl-7-carbaguanosine(34) in tRNA + S-adenosyl-L-methionine = epoxyqueuosine(34) in tRNA + adenine + L-methionine + 2 H(+). The protein operates within tRNA modification; tRNA-queuosine biosynthesis. In terms of biological role, transfers and isomerizes the ribose moiety from AdoMet to the 7-aminomethyl group of 7-deazaguanine (preQ1-tRNA) to give epoxyqueuosine (oQ-tRNA). In Bordetella parapertussis (strain 12822 / ATCC BAA-587 / NCTC 13253), this protein is S-adenosylmethionine:tRNA ribosyltransferase-isomerase.